The chain runs to 226 residues: MNENLFASFAAPTILGLPAAVLIILFPPLLVPTSKHLINNRLITTQQWLIQLTSKQMMTMHSTKGRTWSLMLVSLIIFITTTNLLGLLPHSFTPTTQLSMNLAMAIPLWAGAVVMGFRFKTKNALAHFLPQGTPTPLIPMLVIIETISLLIQPMALAVRLTANITAGHLLMHLIGSATLALSTINLPYALIIFTILILLTILEIAVALIQAYVFTLLVSLYLHDNT.

6 consecutive transmembrane segments (helical) span residues Phe6–Phe26, Trp68–Leu88, Gln97–Phe117, Ile138–Val158, Ile164–Ile184, and Ala189–Ile209.

The protein belongs to the ATPase A chain family. Component of the ATP synthase complex composed at least of ATP5F1A/subunit alpha, ATP5F1B/subunit beta, ATP5MC1/subunit c (homooctomer), MT-ATP6/subunit a, MT-ATP8/subunit 8, ATP5ME/subunit e, ATP5MF/subunit f, ATP5MG/subunit g, ATP5MK/subunit k, ATP5MJ/subunit j, ATP5F1C/subunit gamma, ATP5F1D/subunit delta, ATP5F1E/subunit epsilon, ATP5PF/subunit F6, ATP5PB/subunit b, ATP5PD/subunit d, ATP5PO/subunit OSCP. ATP synthase complex consists of a soluble F(1) head domain (subunits alpha(3) and beta(3)) - the catalytic core - and a membrane F(0) domain - the membrane proton channel (subunits c, a, 8, e, f, g, k and j). These two domains are linked by a central stalk (subunits gamma, delta, and epsilon) rotating inside the F1 region and a stationary peripheral stalk (subunits F6, b, d, and OSCP). Interacts with DNAJC30; interaction is direct.

It localises to the mitochondrion inner membrane. The enzyme catalyses H(+)(in) = H(+)(out). Subunit a, of the mitochondrial membrane ATP synthase complex (F(1)F(0) ATP synthase or Complex V) that produces ATP from ADP in the presence of a proton gradient across the membrane which is generated by electron transport complexes of the respiratory chain. ATP synthase complex consist of a soluble F(1) head domain - the catalytic core - and a membrane F(1) domain - the membrane proton channel. These two domains are linked by a central stalk rotating inside the F(1) region and a stationary peripheral stalk. During catalysis, ATP synthesis in the catalytic domain of F(1) is coupled via a rotary mechanism of the central stalk subunits to proton translocation. With the subunit c (ATP5MC1), forms the proton-conducting channel in the F(0) domain, that contains two crucial half-channels (inlet and outlet) that facilitate proton movement from the mitochondrial intermembrane space (IMS) into the matrix. Protons are taken up via the inlet half-channel and released through the outlet half-channel, following a Grotthuss mechanism. The polypeptide is ATP synthase F(0) complex subunit a (Pan troglodytes (Chimpanzee)).